Consider the following 309-residue polypeptide: uncharacterized protein (309 aa).

Positions 11 to 87 constitute an S4 RNA-binding domain; it reads QRLDTFLATL…FPLDILYEDE (77 aa). The active site involves aspartate 131.

It belongs to the pseudouridine synthase RluA family.

It carries out the reaction a uridine in RNA = a pseudouridine in RNA. This is an uncharacterized protein from Mycoplasma pneumoniae (strain ATCC 29342 / M129 / Subtype 1) (Mycoplasmoides pneumoniae).